Reading from the N-terminus, the 419-residue chain is GTPase Obg (419 aa).

Residues 1-158 (MFVDQARIFV…KWIRLELKLL (158 aa)) enclose the Obg domain. The OBG-type G domain maps to 159–327 (ADVGLVGFPN…LMGKTYALLQ (169 aa)). GTP contacts are provided by residues 165–172 (GFPNAGKS), 190–194 (FTTLV), 212–215 (DIPG), 282–285 (NKMD), and 308–310 (SAV). Residues serine 172 and threonine 192 each contribute to the Mg(2+) site. The OCT domain maps to 342–419 (RRFEEELPFK…IKDFEFEFTE (78 aa)).

It belongs to the TRAFAC class OBG-HflX-like GTPase superfamily. OBG GTPase family. As to quaternary structure, monomer. The cofactor is Mg(2+).

The protein resides in the cytoplasm. Its function is as follows. An essential GTPase which binds GTP, GDP and possibly (p)ppGpp with moderate affinity, with high nucleotide exchange rates and a fairly low GTP hydrolysis rate. Plays a role in control of the cell cycle, stress response, ribosome biogenesis and in those bacteria that undergo differentiation, in morphogenesis control. The chain is GTPase Obg from Syntrophomonas wolfei subsp. wolfei (strain DSM 2245B / Goettingen).